The primary structure comprises 249 residues: tRNA pseudouridine synthase A (249 aa).

Catalysis depends on Asp-53, which acts as the Nucleophile. Tyr-111 lines the substrate pocket.

It belongs to the tRNA pseudouridine synthase TruA family. Homodimer.

The enzyme catalyses uridine(38/39/40) in tRNA = pseudouridine(38/39/40) in tRNA. Functionally, formation of pseudouridine at positions 38, 39 and 40 in the anticodon stem and loop of transfer RNAs. The protein is tRNA pseudouridine synthase A of Streptococcus pneumoniae (strain 70585).